The chain runs to 462 residues: U2 small nuclear ribonucleoprotein auxiliary factor 35 kDa subunit-related protein 2 (462 aa).

The segment covering 1-13 (METAGATADATAG) has biased composition (low complexity). 3 disordered regions span residues 1 to 22 (META…RKKY), 44 to 66 (AELA…EEER), and 115 to 138 (WEEQ…EREE). A Glycyl lysine isopeptide (Lys-Gly) (interchain with G-Cter in SUMO2) cross-link involves residue Lys-49. The segment covering 57 to 66 (AEEKRLEEER) has biased composition (basic and acidic residues). The segment at 170-198 (EKDRANCPFYSKTGACRFGDRCSRKHNFP) adopts a C3H1-type 1 zinc-finger fold. The RRM domain occupies 202-308 (PTLLIKGMFT…RQLQCEFCPV (107 aa)). The C3H1-type 2 zinc finger occupies 310–337 (RWKMAICGLFEVQQCPRGKHCNFLHVFR). At Ser-353 the chain carries Phosphoserine. The disordered stretch occupies residues 354–462 (PDWTSSSFGK…QPQPQPQSDP (109 aa)). Basic and acidic residues predominate over residues 364–379 (NSERRERASHYDEYYG). The residue at position 389 (Ser-389) is a Phosphoserine. The segment covering 392 to 403 (FYKRNGESDRKS) has biased composition (basic and acidic residues). The span at 404–417 (SSRHRVKKSHRYGM) shows a compositional bias: basic residues.

In terms of assembly, component of the U11/U12 snRNPs that are part of the U12-type spliceosome. Interacts (via RS domain) with SRSF1 and SRSF2. Interacts with U2AF2/U2AF65. Phosphorylated in the RS domain by SRPK1.

It localises to the nucleus. Functionally, pre-mRNA-binding protein required for splicing of both U2- and U12-type introns. Selectively interacts with the 3'-splice site of U2- and U12-type pre-mRNAs and promotes different steps in U2 and U12 intron splicing. Recruited to U12 pre-mRNAs in an ATP-dependent manner and is required for assembly of the prespliceosome, a precursor to other spliceosomal complexes. For U2-type introns, it is selectively and specifically required for the second step of splicing. In Mus musculus (Mouse), this protein is U2 small nuclear ribonucleoprotein auxiliary factor 35 kDa subunit-related protein 2 (Zrsr2).